Here is a 326-residue protein sequence, read N- to C-terminus: Tetraacyldisaccharide 4'-kinase (326 aa).

Residue 58-65 (SVGGNGKT) coordinates ATP.

Belongs to the LpxK family.

It carries out the reaction a lipid A disaccharide + ATP = a lipid IVA + ADP + H(+). Its pathway is glycolipid biosynthesis; lipid IV(A) biosynthesis; lipid IV(A) from (3R)-3-hydroxytetradecanoyl-[acyl-carrier-protein] and UDP-N-acetyl-alpha-D-glucosamine: step 6/6. Transfers the gamma-phosphate of ATP to the 4'-position of a tetraacyldisaccharide 1-phosphate intermediate (termed DS-1-P) to form tetraacyldisaccharide 1,4'-bis-phosphate (lipid IVA). This chain is Tetraacyldisaccharide 4'-kinase, found in Pseudoalteromonas translucida (strain TAC 125).